Here is a 191-residue protein sequence, read N- to C-terminus: Imidazoleglycerol-phosphate dehydratase (191 aa).

This sequence belongs to the imidazoleglycerol-phosphate dehydratase family.

It is found in the cytoplasm. The enzyme catalyses D-erythro-1-(imidazol-4-yl)glycerol 3-phosphate = 3-(imidazol-4-yl)-2-oxopropyl phosphate + H2O. The protein operates within amino-acid biosynthesis; L-histidine biosynthesis; L-histidine from 5-phospho-alpha-D-ribose 1-diphosphate: step 6/9. The sequence is that of Imidazoleglycerol-phosphate dehydratase from Methanosarcina mazei (strain ATCC BAA-159 / DSM 3647 / Goe1 / Go1 / JCM 11833 / OCM 88) (Methanosarcina frisia).